The sequence spans 349 residues: MHILVTGAAGFIGSHTVLELLNSGYTVLCIDNFANAISVTDEHGNAISLKRVAQLTGKDVPFQNVDVCDEAALEKVFSENKFDGIIHLAALKAVGESVAKPLQYYSNNLVASLNLIQMCLKYNVKNFVFSSSATVYGPPSELPITEKSQTGQGITNPYGQTKYMMEQILIDVGKANPEWNVVLLRYFNPVGAHKSGLIGEDPKGVPNNLMPYVSQVAIGKLPVLTIYGDQFDTVDGTGVRDYIHVVDLAKGHVKAFDRIKTVGNIGTEIYNLGTGVGYSVRQMVDALKKVSGRDIPVKIGVPRPGDVASVYCDPSLAQEKLGWRAETGLEEMCADLWNWQTKNPQGFSA.

NAD(+) contacts are provided by residues 10-12 (GFI), 31-35 (DNFAN), 66-67 (DV), and Lys-92. 132–134 (SAT) contacts substrate. Tyr-158 acts as the Proton acceptor in catalysis. Residues Lys-162 and Tyr-186 each contribute to the NAD(+) site. Substrate-binding positions include 186–188 (YFN), 207–209 (NNL), 225–227 (TIY), Arg-240, and 303–306 (RPGD).

This sequence belongs to the NAD(P)-dependent epimerase/dehydratase family. NAD(+) serves as cofactor. In terms of tissue distribution, expressed in gonads, vulva, intestine, hypdermis and nervous system.

It catalyses the reaction UDP-alpha-D-glucose = UDP-alpha-D-galactose. The catalysed reaction is UDP-N-acetyl-alpha-D-glucosamine = UDP-N-acetyl-alpha-D-galactosamine. Its pathway is carbohydrate metabolism; galactose metabolism. Functionally, catalyzes two distinct but analogous reactions: the reversible epimerization of UDP-glucose to UDP-galactose and the reversible epimerization of UDP-N-acetylglucosamine to UDP-N-acetylgalactosamine. The reaction with UDP-Gal plays a critical role in the Leloir pathway of galactose catabolism in which galactose is converted to the glycolytic intermediate glucose 6-phosphate. It contributes to the catabolism of dietary galactose and enables the endogenous biosynthesis of both UDP-Gal and UDP-GalNAc when exogenous sources are limited. Both UDP-sugar interconversions are important for the synthesis of glycoproteins and glycolipids. This is UDP-glucose 4-epimerase from Caenorhabditis elegans.